Reading from the N-terminus, the 538-residue chain is Tetracenomycin C resistance and export protein (538 aa).

The next 14 membrane-spanning stretches (helical) occupy residues 28–48 (LLAVAVGVMMVALDSTIVAIA), 65–85 (WITNGYLLALAVSLITAGKLG), 100–120 (GFAVTSAAIGLSGSVAAIVVF), 126–146 (LFGALMQPSALGLLRVTFPPG), 154–174 (IWSGVVGASTAAGPIIGGLLV), 181–201 (AVFFINVPVGLAALVAGLVIL), 213–233 (FDVSGIVLLSGAMFCLVWGLI), 239–259 (GWGDLRTLGFLAAAVLAFAGF), 286–306 (VLMVLMAFSFIGGLFFVTFYL), 319–339 (VHLLPLTGMMIVGAPVSGIVI), 342–362 (FGPGGPLVVGMLLTAASLWGM), 371–391 (MGITSLWFVLLGLGLAPVMVG), 413–433 (QSAMQVGGSLGTAVLGVLMAS), and 494–514 (MGLAFTVAGAVALVAAAVALF).

This sequence belongs to the major facilitator superfamily. EmrB family.

It is found in the cell membrane. Its pathway is antibiotic biosynthesis; tetracenomycin C biosynthesis. Functionally, resistance to tetracenomycin C by an active tetracenomycin C efflux system which is probably energized by transmembrane electrochemical gradients. The chain is Tetracenomycin C resistance and export protein (tcmA) from Streptomyces glaucescens.